The following is a 417-amino-acid chain: Creatine kinase U-type, mitochondrial (417 aa).

The transit peptide at 1–39 (MAGPFSRLLSARPGLRLLALAGAGSLAAGFLLRPEPVRA) directs the protein to the mitochondrion. The segment at 40-64 (ASERRRLYPPSAEYPDLRKHNNCMA) is cardiolipin-binding. A Phosphagen kinase N-terminal domain is found at 45–131 (RLYPPSAEYP…FDPVIQERHN (87 aa)). Ser-151 is modified (phosphoserine). In terms of domain architecture, Phosphagen kinase C-terminal spans 158 to 400 (YVLSSRVRTG…NYLIDCERRL (243 aa)). Position 161–165 (161–165 (SSRVR)) interacts with ATP. Phosphoserine is present on Ser-196. Thr-213 bears the Phosphothreonine mark. An ATP-binding site is contributed by His-224. Ser-232 is subject to Phosphoserine. ATP-binding positions include Arg-269, Arg-325, 353-358 (RGTGGV), and Asp-368. Residue Thr-355 is modified to Phosphothreonine.

This sequence belongs to the ATP:guanido phosphotransferase family. In terms of assembly, exists as an octamer composed of four MTCK homodimers.

It localises to the mitochondrion inner membrane. The enzyme catalyses creatine + ATP = N-phosphocreatine + ADP + H(+). Reversibly catalyzes the transfer of phosphate between ATP and various phosphogens (e.g. creatine phosphate). Creatine kinase isoenzymes play a central role in energy transduction in tissues with large, fluctuating energy demands, such as skeletal muscle, heart, brain and spermatozoa. The polypeptide is Creatine kinase U-type, mitochondrial (CKMT1A) (Homo sapiens (Human)).